The chain runs to 401 residues: uncharacterized protein (401 aa).

Residues Cys7, Cys13, Cys16, and Cys94 each coordinate [4Fe-4S] cluster. Residues Gln230, Tyr259, Glu280, and Asp328 each contribute to the S-adenosyl-L-methionine site. Residue Cys355 is the Nucleophile of the active site.

This sequence belongs to the class I-like SAM-binding methyltransferase superfamily. RNA M5U methyltransferase family.

This is an uncharacterized protein from Chlamydia pneumoniae (Chlamydophila pneumoniae).